A 498-amino-acid chain; its full sequence is MTSSKNPTNDNSYFDAVLVGGGIMSSTLALLISEVLPDIKFLIIEKLNAPGSESTGAFNNAGTGHAANCELNYTPLDEKGNLKIDKALSINRSFETSMSLWASLYEAGKIDIKKFLKFIPHISFVSGQDNISFLKKRFQKMTENPEFIDMEFSSSFDEISSWAPLITKDRNPSTQIAATRIGRGTDINFEALTKEYLSLVSLNKNVEIRYKTELVDLKKIDKKQWELEISSEGRKTSIRTGYVFLGAGGKTINYLQKSKIPEAKSYGGFPVSGKWLICEKKDLTEKHNSKVYGKADIGSPPMSVPHLDTRWIDNKKLLLYGPFAGFTTKFLKQSSYFDLFSSIKKNNIFSMLDVGFKNNDLINYLISQSLKNHNSRVENLKNMMPSANSSDWYLKNAGQRVQIIKKTEAGGSLKFGTEIVNSSDGSLSALLGASPGASTAVSIMVKVLEKSVFFLNDKHNLQKKINDLIYPELSDSENNSTFIKDIKKRNNSIFGFHP.

The protein belongs to the MQO family. FAD serves as cofactor.

The enzyme catalyses (S)-malate + a quinone = a quinol + oxaloacetate. It functions in the pathway carbohydrate metabolism; tricarboxylic acid cycle; oxaloacetate from (S)-malate (quinone route): step 1/1. In Prochlorococcus marinus (strain MIT 9301), this protein is Probable malate:quinone oxidoreductase.